The primary structure comprises 296 residues: MGPTASGKTALAIDMATQYNCEIISVDSALIYRDMNIGSAKPSAEELEMAPHKLIDILDPSESYSAADFRRDALLAIEDIISRGKTPLLVGGTMMYFKALLEGLSPLPSADEAIRQQILAQAQTEGWEALHQELCNIDPVAGERIHPNDPQRLSRALEVYRISGKTMTELTQTKSAALPYDVVQFAIAPNDRKVLHELIAKRFNIMLEQGFIEEVARLKARDDLHLELPSMRCVGYRQCWQYLDNEFDHATMVEKATAATRQLAKRQLTWLRSWPDLQWLESGVEGNLVTLMRQSR.

Residue 2 to 9 coordinates ATP; the sequence is GPTASGKT. Residue 4 to 9 participates in substrate binding; sequence TASGKT. Interaction with substrate tRNA regions lie at residues 27 to 30, 151 to 155, and 232 to 237; these read DSAL, QRLSR, and RCVGYR.

Belongs to the IPP transferase family. In terms of assembly, monomer. Mg(2+) serves as cofactor.

The catalysed reaction is adenosine(37) in tRNA + dimethylallyl diphosphate = N(6)-dimethylallyladenosine(37) in tRNA + diphosphate. Functionally, catalyzes the transfer of a dimethylallyl group onto the adenine at position 37 in tRNAs that read codons beginning with uridine, leading to the formation of N6-(dimethylallyl)adenosine (i(6)A). In Shewanella frigidimarina (strain NCIMB 400), this protein is tRNA dimethylallyltransferase.